The primary structure comprises 359 residues: Peptide chain release factor 1 (359 aa).

N5-methylglutamine is present on Gln236.

This sequence belongs to the prokaryotic/mitochondrial release factor family. Post-translationally, methylated by PrmC. Methylation increases the termination efficiency of RF1.

It localises to the cytoplasm. Peptide chain release factor 1 directs the termination of translation in response to the peptide chain termination codons UAG and UAA. In Malacoplasma penetrans (strain HF-2) (Mycoplasma penetrans), this protein is Peptide chain release factor 1.